The primary structure comprises 130 residues: Small ribosomal subunit protein uS9 (130 aa).

This sequence belongs to the universal ribosomal protein uS9 family.

This Cupriavidus metallidurans (strain ATCC 43123 / DSM 2839 / NBRC 102507 / CH34) (Ralstonia metallidurans) protein is Small ribosomal subunit protein uS9.